The primary structure comprises 102 residues: Small ribosomal subunit protein uS10 (102 aa).

Belongs to the universal ribosomal protein uS10 family. In terms of assembly, part of the 30S ribosomal subunit.

Involved in the binding of tRNA to the ribosomes. This chain is Small ribosomal subunit protein uS10, found in Enterococcus faecalis (strain ATCC 700802 / V583).